The chain runs to 623 residues: MTQRGEVPDFLHGCGLPAAWAGLPQWRILETGFGFGLNFLATWAAWRADPHRPVLLHFVATEAQPVSAADLLRAGSARPGLAPLAQELSRQWWGLLPGLHRLRFDDGHVLLTLCLGDWQAQLRQQRQQLTVDSVYLHDLPQDWRPQRHPAPAGLPGLPGLKAVAACCRRGTRLASRCSTVRDALVQCGFTLHPAPGSDAQRDMLHAVYQPHWQPRTMRPAAAPATPGECMVIGGGIAGAATAASLARRGWQLRVLDQAAAPAAGASGLPAGIFAPHVSADDNLLSRLSRSGVRSTLEQARWRLREGLDWSHCGVLEHRADASPGLPARWSDGPGADGRQSAAHAALGALAQSGLPANASVCWHPQAGWIRPARLVAALLAQPGIRWQGACRVARLRRVQAPGAGPTAWQALDAQGRVLAQAPTVVIAAGAGSLELLEHRWPLQPVRGQVSWGLHGDPAAPLLPFPVNGHGHLVPRFPLGDDAQGPCAWVMGATFERGVEQMPPAPADVQAAHASHWARLQTLLPRMAPPLESAFAAARADAGLAASARAAQSWAAVRCTAPDRLPIVGPVDAAALPGLWVCSAMGARGLTLALLCGELLAARLQGEPLPIEHRLAKALDSGRM.

Residues 1-209 (MTQRGEVPDF…QRDMLHAVYQ (209 aa)) form a tRNA (mnm(5)s(2)U34)-methyltransferase region. The FAD-dependent cmnm(5)s(2)U34 oxidoreductase stretch occupies residues 232-623 (IGGGIAGAAT…LAKALDSGRM (392 aa)).

The protein in the N-terminal section; belongs to the methyltransferase superfamily. tRNA (mnm(5)s(2)U34)-methyltransferase family. This sequence in the C-terminal section; belongs to the DAO family. FAD is required as a cofactor.

It is found in the cytoplasm. It catalyses the reaction 5-aminomethyl-2-thiouridine(34) in tRNA + S-adenosyl-L-methionine = 5-methylaminomethyl-2-thiouridine(34) in tRNA + S-adenosyl-L-homocysteine + H(+). In terms of biological role, catalyzes the last two steps in the biosynthesis of 5-methylaminomethyl-2-thiouridine (mnm(5)s(2)U) at the wobble position (U34) in tRNA. Catalyzes the FAD-dependent demodification of cmnm(5)s(2)U34 to nm(5)s(2)U34, followed by the transfer of a methyl group from S-adenosyl-L-methionine to nm(5)s(2)U34, to form mnm(5)s(2)U34. The chain is tRNA 5-methylaminomethyl-2-thiouridine biosynthesis bifunctional protein MnmC (mnmC) from Verminephrobacter eiseniae (strain EF01-2).